Consider the following 418-residue polypeptide: Thyroxine-binding globulin (418 aa).

The first 20 residues, 1–20 (MSMFFYLFLLVLGLQATIHC), serve as a signal peptide directing secretion. N-linked (GlcNAc...) asparagine glycans are attached at residues N24, N39, N102, N168, N227, and N256. Thyroxine is bound by residues N296 and K401.

It belongs to the serpin family. As to expression, expressed by the liver and secreted in plasma.

It localises to the secreted. In terms of biological role, major thyroid hormone transport protein in serum. This chain is Thyroxine-binding globulin (Serpina7), found in Rattus norvegicus (Rat).